We begin with the raw amino-acid sequence, 58 residues long: Histatherin (58 aa).

Positions 1-19 (MKIFIFIFIMALILAMIRA) are cleaved as a signal peptide.

The protein belongs to the histatin/statherin family. In terms of tissue distribution, expressed in mammary glands.

It is found in the secreted. This is Histatherin from Bos taurus (Bovine).